The primary structure comprises 57 residues: MAVPFRRTSKTRKRLRRTHFKLQVPGMVQCPNCGEWKLAHRVCKACGTYKGRDVVNK.

The protein belongs to the bacterial ribosomal protein bL32 family.

This Geobacillus kaustophilus (strain HTA426) protein is Large ribosomal subunit protein bL32.